The following is a 372-amino-acid chain: Probable basic-leucine zipper transcription factor G (372 aa).

Disordered stretches follow at residues 1–20 (MLSV…QQQQ) and 176–234 (TTNN…EKFE). 2 stretches are compositionally biased toward low complexity: residues 11-20 (QQPQQQQQQQ) and 176-215 (TTNN…KSNT). The segment covering 223–234 (IRNSNSTFEKFE) has biased composition (polar residues). The bZIP domain occupies 277 to 340 (ELKRQKRLIK…LILKAEVGQL (64 aa)). Residues 279–301 (KRQKRLIKNRESAHLSRQRKRER) are basic motif. Residues 305 to 340 (LEHRVEELSSNSIDINKTLSSLENENLILKAEVGQL) are leucine-zipper.

The protein belongs to the bZIP family.

Its subcellular location is the nucleus. Its function is as follows. Probable transcriptional regulator. In Dictyostelium discoideum (Social amoeba), this protein is Probable basic-leucine zipper transcription factor G (bzpG).